A 633-amino-acid chain; its full sequence is DNA mismatch repair protein MutL (633 aa).

Belongs to the DNA mismatch repair MutL/HexB family.

Functionally, this protein is involved in the repair of mismatches in DNA. It is required for dam-dependent methyl-directed DNA mismatch repair. May act as a 'molecular matchmaker', a protein that promotes the formation of a stable complex between two or more DNA-binding proteins in an ATP-dependent manner without itself being part of a final effector complex. The protein is DNA mismatch repair protein MutL of Bacillus pumilus (strain SAFR-032).